A 691-amino-acid polypeptide reads, in one-letter code: Elongation factor G (691 aa).

In terms of domain architecture, tr-type G spans E8–I282. GTP is bound by residues A17–T24, D81–H85, and N135–D138.

The protein belongs to the TRAFAC class translation factor GTPase superfamily. Classic translation factor GTPase family. EF-G/EF-2 subfamily.

It is found in the cytoplasm. Its function is as follows. Catalyzes the GTP-dependent ribosomal translocation step during translation elongation. During this step, the ribosome changes from the pre-translocational (PRE) to the post-translocational (POST) state as the newly formed A-site-bound peptidyl-tRNA and P-site-bound deacylated tRNA move to the P and E sites, respectively. Catalyzes the coordinated movement of the two tRNA molecules, the mRNA and conformational changes in the ribosome. The chain is Elongation factor G from Prochlorococcus marinus subsp. pastoris (strain CCMP1986 / NIES-2087 / MED4).